The chain runs to 446 residues: MMQLKKRYFALILLLFLWSGCDRGVDPQPDPLQPDVYLLVNARAAHTNGEESINMDAEDFEDRVHSLAMLVFDSNTGEKVAEHFSSSIGSGTSTYVFTVKLKPGQRDFFFVANIPNMQTAMASIVNKSDMNHFMQVFRDLDPIHYHNATNNNGFPMSRMYSNQTVTIGGTITQPLPFKPDGENNVKLQRVVAKLDVNIVEGVENLQKIELCNANVHYRLVPNQSEPIQFYGPVELRRVGATNQWLGYMPEAIVESTKWWGNTGNAENKPINFFRLTTRGGLVYDVPIITHEGAIPGGQYLPFAKGLLADKPSYTVYRNRHYIYRIKTLPDKIEVKYSICDWNIVTNDTYMGYGYNVGVDEQGNVTITNTMQNCDPHVVRLVAKNGAYFGSQPTDTSVEFTELANGASQTFKVNKDAVAVGSAYLEVYYNPDLNATGVVPDKVFIKK.

The signal sequence occupies residues 1–20 (MMQLKKRYFALILLLFLWSG). Cys-21 carries N-palmitoyl cysteine lipidation. Cys-21 is lipidated: S-diacylglycerol cysteine. The propeptide occupies 21 to 43 (CDRGVDPQPDPLQPDVYLLVNAR).

This sequence belongs to the bacteroidetes fimbrillin superfamily. FimB/Mfa2 family. Component of the fimbrium tip. Minor fimbriae are composed of a structural subunit, most often Mfa1, and the accessory subunits Mfa3, Mfa4 and Mfa5. Fimbrium assembly occurs by linear, head-to-tail oligomerization of fimbrial subunits. This is mediated via insertion of a C-terminal beta-strand from one subunit into a groove in the N-terminal domain of the following subunit. Mfa3 is required for Mfa4 and Mfa5 insertion into the fimbrium.

It is found in the fimbrium. Its subcellular location is the cell outer membrane. In terms of biological role, tip subunit of the minor fimbriae. These filamentous pili are attached to the cell surface; they mediate biofilm formation, adhesion onto host cells and onto other bacteria that are part of the oral microbiome. They play an important role in invasion of periodontal tissues and are recognized as major virulence factors. Fimbrium subunits from different strains have highly divergent sequences, and this correlates with pathogenicity. The sequence is that of Minor fimbrium tip subunit Mfa3 (mfa3) from Porphyromonas gingivalis (strain ATCC 33277 / DSM 20709 / CIP 103683 / JCM 12257 / NCTC 11834 / 2561).